Reading from the N-terminus, the 697-residue chain is Ribosomal RNA large subunit methyltransferase K/L (697 aa).

The region spanning 43-154 is the THUMP domain; that stretch reads ILYNSLMWSR…QNLVHIMLDL (112 aa).

This sequence belongs to the methyltransferase superfamily. RlmKL family.

It is found in the cytoplasm. The catalysed reaction is guanosine(2445) in 23S rRNA + S-adenosyl-L-methionine = N(2)-methylguanosine(2445) in 23S rRNA + S-adenosyl-L-homocysteine + H(+). It carries out the reaction guanosine(2069) in 23S rRNA + S-adenosyl-L-methionine = N(2)-methylguanosine(2069) in 23S rRNA + S-adenosyl-L-homocysteine + H(+). Its function is as follows. Specifically methylates the guanine in position 2445 (m2G2445) and the guanine in position 2069 (m7G2069) of 23S rRNA. This Buchnera aphidicola subsp. Schizaphis graminum (strain Sg) protein is Ribosomal RNA large subunit methyltransferase K/L.